A 553-amino-acid chain; its full sequence is Hydroxylamine reductase (553 aa).

The [2Fe-2S] cluster site is built by cysteine 3, cysteine 6, cysteine 18, and cysteine 25. Histidine 249, glutamate 273, cysteine 317, cysteine 405, cysteine 433, cysteine 459, glutamate 493, and lysine 495 together coordinate hybrid [4Fe-2O-2S] cluster. At cysteine 405 the chain carries Cysteine persulfide.

Belongs to the HCP family. [2Fe-2S] cluster serves as cofactor. The cofactor is hybrid [4Fe-2O-2S] cluster.

The protein resides in the cytoplasm. The enzyme catalyses A + NH4(+) + H2O = hydroxylamine + AH2 + H(+). Its function is as follows. Catalyzes the reduction of hydroxylamine to form NH(3) and H(2)O. The sequence is that of Hydroxylamine reductase from Actinobacillus succinogenes (strain ATCC 55618 / DSM 22257 / CCUG 43843 / 130Z).